Reading from the N-terminus, the 175-residue chain is NAD(P)H-quinone oxidoreductase subunit I, chloroplastic (175 aa).

2 consecutive 4Fe-4S ferredoxin-type domains span residues G55–E84 and Q95–E124. [4Fe-4S] cluster-binding residues include C64, C67, C70, C74, C104, C107, C110, and C114.

It belongs to the complex I 23 kDa subunit family. In terms of assembly, NDH is composed of at least 16 different subunits, 5 of which are encoded in the nucleus. It depends on [4Fe-4S] cluster as a cofactor.

It is found in the plastid. It localises to the chloroplast thylakoid membrane. It catalyses the reaction a plastoquinone + NADH + (n+1) H(+)(in) = a plastoquinol + NAD(+) + n H(+)(out). It carries out the reaction a plastoquinone + NADPH + (n+1) H(+)(in) = a plastoquinol + NADP(+) + n H(+)(out). In terms of biological role, NDH shuttles electrons from NAD(P)H:plastoquinone, via FMN and iron-sulfur (Fe-S) centers, to quinones in the photosynthetic chain and possibly in a chloroplast respiratory chain. The immediate electron acceptor for the enzyme in this species is believed to be plastoquinone. Couples the redox reaction to proton translocation, and thus conserves the redox energy in a proton gradient. In Chlorokybus atmophyticus (Soil alga), this protein is NAD(P)H-quinone oxidoreductase subunit I, chloroplastic.